The sequence spans 212 residues: Cell division protein SepF (212 aa).

Residues 32–104 (RYADPDTSYD…APLGSDAHRE (73 aa)) are disordered. Acidic residues predominate over residues 64 to 73 (EAEEDGGDYG).

The protein belongs to the SepF family. As to quaternary structure, homodimer. Interacts with FtsZ.

It is found in the cytoplasm. Functionally, cell division protein that is part of the divisome complex and is recruited early to the Z-ring. Probably stimulates Z-ring formation, perhaps through the cross-linking of FtsZ protofilaments. Its function overlaps with FtsA. In Saccharopolyspora erythraea (strain ATCC 11635 / DSM 40517 / JCM 4748 / NBRC 13426 / NCIMB 8594 / NRRL 2338), this protein is Cell division protein SepF.